A 360-amino-acid polypeptide reads, in one-letter code: Phospho-N-acetylmuramoyl-pentapeptide-transferase (360 aa).

A run of 10 helical transmembrane segments spans residues 27 to 47 (ILGVLTALAISLLVGNKVIVL), 73 to 93 (TMGGALIIFSISVSTLLWGDL), 97 to 117 (YVWVVLLVMLAFGVVGWVDDY), 145 to 165 (AFYLYYTASTPAETALIVPLF), 168 to 188 (VAIPLGMFFIVLTYFVIVGTS), 199 to 219 (GLAILPTVLVGGALGVFAYLT), 236 to 256 (SGELLVFCAALAGAGLGFLWF), 263 to 283 (IFMGDVGSLALGAALGTIAVI), 288 to 308 (LVLFIMGGVFVMETVSVILQV), and 337 to 357 (KVIVRFWIITVCLVLVGFATL).

Belongs to the glycosyltransferase 4 family. MraY subfamily. Mg(2+) is required as a cofactor.

It is found in the cell inner membrane. The catalysed reaction is UDP-N-acetyl-alpha-D-muramoyl-L-alanyl-gamma-D-glutamyl-meso-2,6-diaminopimeloyl-D-alanyl-D-alanine + di-trans,octa-cis-undecaprenyl phosphate = di-trans,octa-cis-undecaprenyl diphospho-N-acetyl-alpha-D-muramoyl-L-alanyl-D-glutamyl-meso-2,6-diaminopimeloyl-D-alanyl-D-alanine + UMP. The protein operates within cell wall biogenesis; peptidoglycan biosynthesis. Its function is as follows. Catalyzes the initial step of the lipid cycle reactions in the biosynthesis of the cell wall peptidoglycan: transfers peptidoglycan precursor phospho-MurNAc-pentapeptide from UDP-MurNAc-pentapeptide onto the lipid carrier undecaprenyl phosphate, yielding undecaprenyl-pyrophosphoryl-MurNAc-pentapeptide, known as lipid I. The protein is Phospho-N-acetylmuramoyl-pentapeptide-transferase of Marinomonas sp. (strain MWYL1).